The sequence spans 267 residues: Integral membrane protein 2C (267 aa).

Threonine 37 carries the post-translational modification Phosphothreonine. Residues 55–75 (VGGVCYLSMGMVVLLMGLVFA) traverse the membrane as a helical; Signal-anchor for type II membrane protein segment. In terms of domain architecture, BRICHOS spans 136–230 (FGGGDPADII…LCNGKDTYRL (95 aa)). A disulfide bridge connects residues cysteine 163 and cysteine 222. N-linked (GlcNAc...) asparagine glycosylation occurs at asparagine 169.

This sequence belongs to the ITM2 family. In terms of assembly, interacts with BACE1. Interacts with APP. Interacts with STMN2. Type I membrane-bound, as well as soluble, furin has a pre-eminent role in ITM2C proteolytic processing. PCSK7 and PCSK5 may also be involved although to a lesser extent. The soluble form of PCSK7 is incapable of processing ITM2C. Fails to undergo shedding by ADAM10 and intramembrane cleavage by SPPL2B.

The protein resides in the lysosome membrane. The protein localises to the cell membrane. In terms of biological role, negative regulator of amyloid-beta peptide production. May inhibit the processing of APP by blocking its access to alpha- and beta-secretase. Binding to the beta-secretase-cleaved APP C-terminal fragment is negligible, suggesting that ITM2C is a poor gamma-secretase cleavage inhibitor. May play a role in TNF-induced cell death and neuronal differentiation. This Macaca fascicularis (Crab-eating macaque) protein is Integral membrane protein 2C (ITM2C).